The following is a 95-amino-acid chain: Small integral membrane protein 26 (95 aa).

The chain crosses the membrane as a helical span at residues 13 to 35 (MSVVYGIGTWSVLGSLLYYSRTM).

The protein belongs to the SMIM26 family. In terms of assembly, interacts with AGK and SLC25A11. In terms of tissue distribution, detected in kidney (at protein level).

It is found in the mitochondrion outer membrane. In terms of biological role, may play a role in cell viability. This chain is Small integral membrane protein 26, found in Homo sapiens (Human).